We begin with the raw amino-acid sequence, 348 residues long: Isopentenyl-diphosphate delta-isomerase (348 aa).

Substrate is bound at residue 9 to 10 (RK). FMN-binding positions include 68-70 (AMT), Ser98, and Asn127. Gln157 contacts substrate. Glu158 is a Mg(2+) binding site. FMN contacts are provided by residues Lys188, Ser213, Thr218, and 286–287 (AG).

The protein belongs to the IPP isomerase type 2 family. As to quaternary structure, homooctamer. Dimer of tetramers. Requires FMN as cofactor. The cofactor is NADPH. Mg(2+) serves as cofactor.

It localises to the cytoplasm. The catalysed reaction is isopentenyl diphosphate = dimethylallyl diphosphate. Involved in the biosynthesis of isoprenoids. Catalyzes the 1,3-allylic rearrangement of the homoallylic substrate isopentenyl (IPP) to its allylic isomer, dimethylallyl diphosphate (DMAPP). The sequence is that of Isopentenyl-diphosphate delta-isomerase from Limosilactobacillus reuteri subsp. reuteri (strain JCM 1112) (Lactobacillus reuteri).